The chain runs to 153 residues: Glucose-6-phosphate 1-dehydrogenase (153 aa).

Residues Arg-21 and Lys-120 each coordinate NADP(+). Lys-120 provides a ligand contact to D-glucose 6-phosphate.

This sequence belongs to the glucose-6-phosphate dehydrogenase family.

It is found in the cytoplasm. It localises to the cytosol. The enzyme catalyses D-glucose 6-phosphate + NADP(+) = 6-phospho-D-glucono-1,5-lactone + NADPH + H(+). It functions in the pathway carbohydrate degradation; pentose phosphate pathway; D-ribulose 5-phosphate from D-glucose 6-phosphate (oxidative stage): step 1/3. Cytosolic glucose-6-phosphate dehydrogenase that catalyzes the first and rate-limiting step of the oxidative branch within the pentose phosphate pathway/shunt, an alternative route to glycolysis for the dissimilation of carbohydrates and a major source of reducing power and metabolic intermediates for fatty acid and nucleic acid biosynthetic processes. This chain is Glucose-6-phosphate 1-dehydrogenase (ZW), found in Hyalophora cecropia (Cecropia moth).